The chain runs to 476 residues: Cysteine--tRNA ligase (476 aa).

C31 contacts Zn(2+). Residues 33–43 carry the 'HIGH' region motif; it reads PTVYNYAHIGN. Residues C211, H236, and E240 each coordinate Zn(2+). A 'KMSKS' region motif is present at residues 269–273; sequence KMSKS. K272 is an ATP binding site.

It belongs to the class-I aminoacyl-tRNA synthetase family. As to quaternary structure, monomer. Zn(2+) serves as cofactor.

The protein resides in the cytoplasm. The enzyme catalyses tRNA(Cys) + L-cysteine + ATP = L-cysteinyl-tRNA(Cys) + AMP + diphosphate. The protein is Cysteine--tRNA ligase of Xanthomonas euvesicatoria pv. vesicatoria (strain 85-10) (Xanthomonas campestris pv. vesicatoria).